Here is a 569-residue protein sequence, read N- to C-terminus: Urease subunit alpha (569 aa).

Residues 131-569 form the Urease domain; it reads GSIDTHIHFI…VPMAQKYFLL (439 aa). Positions 136, 138, and 219 each coordinate Ni(2+). K219 carries the N6-carboxylysine modification. Residue H221 coordinates substrate. Ni(2+) contacts are provided by H248 and H274. H322 functions as the Proton donor in the catalytic mechanism. Residue D362 participates in Ni(2+) binding.

Belongs to the metallo-dependent hydrolases superfamily. Urease alpha subunit family. In terms of assembly, heterotrimer of UreA (gamma), UreB (beta) and UreC (alpha) subunits. Two heterotrimers associate to form the active enzyme. In most bacteria it is thought that three heterotrimers form the active enzyme. It depends on Ni cation as a cofactor. Carboxylation allows a single lysine to coordinate two nickel ions.

The protein resides in the cytoplasm. The catalysed reaction is urea + 2 H2O + H(+) = hydrogencarbonate + 2 NH4(+). It functions in the pathway nitrogen metabolism; urea degradation; CO(2) and NH(3) from urea (urease route): step 1/1. Its activity is regulated as follows. Inhibited by HgCl2 and acetohydroxyamic acid slightly by EDTA, but not by boric acid or L-methionine-DL-sulfoximine. The polypeptide is Urease subunit alpha (Prochlorococcus marinus subsp. pastoris (strain PCC 9511)).